A 407-amino-acid chain; its full sequence is Chorismate synthase (407 aa).

Arg40 and Arg46 together coordinate NADP(+). FMN is bound by residues 140-142 (RSS), 261-262 (QA), Gly305, 320-324 (KPIST), and Arg346.

The protein belongs to the chorismate synthase family. In terms of assembly, homotetramer. FMNH2 is required as a cofactor.

It carries out the reaction 5-O-(1-carboxyvinyl)-3-phosphoshikimate = chorismate + phosphate. Its pathway is metabolic intermediate biosynthesis; chorismate biosynthesis; chorismate from D-erythrose 4-phosphate and phosphoenolpyruvate: step 7/7. In terms of biological role, catalyzes the anti-1,4-elimination of the C-3 phosphate and the C-6 proR hydrogen from 5-enolpyruvylshikimate-3-phosphate (EPSP) to yield chorismate, which is the branch point compound that serves as the starting substrate for the three terminal pathways of aromatic amino acid biosynthesis. This reaction introduces a second double bond into the aromatic ring system. In Corynebacterium glutamicum (strain R), this protein is Chorismate synthase.